The primary structure comprises 260 residues: Fructose import ATP-binding protein FrcA (260 aa).

One can recognise an ABC transporter domain in the interval 7-251 (LTARGLVKRY…DAVAFMTGAK (245 aa)). Residue 39–46 (GDNGAGKS) coordinates ATP.

The protein belongs to the ABC transporter superfamily. The complex is composed of two ATP-binding proteins (FrcA), two transmembrane proteins (FrcC) and a solute-binding protein (FrcB).

The protein localises to the cell inner membrane. The enzyme catalyses D-fructose(out) + ATP + H2O = D-fructose(in) + ADP + phosphate + H(+). Its function is as follows. Part of the high-affinity ABC transporter complex FrcBCA involved in fructose uptake. Is also a high-affinity transporter for ribose and mannose. Responsible for energy coupling to the transport system. The protein is Fructose import ATP-binding protein FrcA of Rhizobium meliloti (Ensifer meliloti).